An 819-amino-acid polypeptide reads, in one-letter code: Zinc finger protein with KRAB and SCAN domains 5 (819 aa).

The SCAN box domain maps to 51–132 (QRFKHFQYHE…AVIESIQREL (82 aa)). Glycyl lysine isopeptide (Lys-Gly) (interchain with G-Cter in SUMO2) cross-links involve residues Lys214, Lys246, and Lys302. The KRAB domain maps to 216–287 (EDVADVAVSF…HWVAAERTEK (72 aa)). 2 disordered regions span residues 236-263 (SQKS…KEGN) and 283-340 (ERTE…GERG). Basic and acidic residues predominate over residues 240-249 (LGRDSRKEDC). Positions 329-340 (VNRKQKSNGERG) are enriched in basic and acidic residues. C2H2-type zinc fingers lie at residues 341–363 (HRCG…RRIH), 369–391 (FKCG…QRVH), 397–419 (YKCQ…HSVH), 425–447 (YGCN…LKRH), 540–562 (HQCN…RRIH), 568–590 (FRCE…HRVH), 596–618 (YACH…QSVH), 624–646 (FKCN…LRLH), and 652–674 (HQCH…QVLH). Residue Lys700 forms a Glycyl lysine isopeptide (Lys-Gly) (interchain with G-Cter in SUMO2) linkage. 3 C2H2-type zinc fingers span residues 708 to 730 (YQCD…YRTH), 764 to 786 (HQCN…QRIH), and 792 to 814 (LQCK…LRSH). A Glycyl lysine isopeptide (Lys-Gly) (interchain with G-Cter in SUMO2) cross-link involves residue Lys776.

It belongs to the krueppel C2H2-type zinc-finger protein family. In terms of tissue distribution, testis specific.

It localises to the nucleus. May be involved in transcriptional regulation. The protein is Zinc finger protein with KRAB and SCAN domains 5 (Zkscan5) of Mus musculus (Mouse).